The primary structure comprises 713 residues: Mitochondrial intermediate peptidase (713 aa).

The transit peptide at 1 to 35 directs the protein to the mitochondrion; it reads MLCVGRLGGLGARAAALPPRRAGRGSLEAGIRARR. Position 126 is an N6-acetyllysine (K126). A Zn(2+)-binding site is contributed by H495. The active site involves E496. H499 and H502 together coordinate Zn(2+).

This sequence belongs to the peptidase M3 family. In terms of assembly, monomer. Zn(2+) is required as a cofactor.

The protein resides in the mitochondrion matrix. The enzyme catalyses Release of an N-terminal octapeptide as second stage of processing of some proteins imported into the mitochondrion.. Activity is divalent cation-dependent. It is stimulated by manganese, magnesium or calcium ions and reversibly inhibited by zinc, cobalt and iron. Cleaves proteins, imported into the mitochondrion, to their mature size. This chain is Mitochondrial intermediate peptidase (MIPEP), found in Homo sapiens (Human).